The following is a 966-amino-acid chain: MEQDYKPHEIENKWQKKWNESRIFQAEPDKREKFFITIPYPYLNGNLHAGHTRTFTIGDVVARHKRMLGYNVLYPMGFHVTGTPIVGLAELIASRDPQTMDVYERLHGIPGDILPALDTPEKIVDYFKVEAEKAMRMIGYSIDWRRKFTTTDPTYKKFIEWQYTRLEEKDLIVKGSHPVKWCPNDNNPVEDHDILHGEEATIVEYTLIKFRYRDLVLPCATLRPETTYGVTNLWVNPNVDYVKARVEKDGNVEFWVVSRDAFRKLTFTDRTVEYVEDMPAKSIIGIKLTNPVTGDEVISLPASFVKPENGSGIVMSVPAHAPFDYLALRDLYDADLSEYGITEDLRKIELISLIQVPEFGEFPAKEIVESMGISDQKDPKAEEATKIVYRREFHGGVLKELTGKYKGYPVSKIKDILTRDFLASNAGETFYEFSEPVVCRCGTPCVVNMVKGQWFLNYSNPDWKAKVYKCLGQMRVIPTEYRVEFENKIDWLKDKACARRKGLGTRLPFDKEWLIESLGDSTIYMSYYIIARFIEKGELALEHLTLSFFDYVLLGKGDSAAVSAETGLKPELIEEIRSHFNYWYPVDLRSSGKDLVPNHLLFFLFHHVALFEEEKWPKALAVNGFVSLEGQKMSKSKGPILTLESAVSSYGADITRMYILSTAEQTQDADWQKAGIDSARRQVDRFYAFAKDVIESGKRGTLSAELKQIDRWMLSRMQNYIKETNAALDSIQTREAIQNSFFLLINDVRWYQRRGGEALLYYVLDNWVRLMAPFTPHLCEEVWEAMGHEDPVSLAQYPLYNEDLIDNGAELSEEAVKSTLNDIEEIIRVTKMTPQKVYLYTAPAWKAEAIRCACGLQVEAPLEVGTLIKTLMAKPELKRFGKEIPKFVQKIVPEFKSGGAERYETFAYLGLDEKDLLKESASFLEKEIGCPVEIQSADSPEYDPQKKSRFAEPLRPAIYIEEKKEE.

Positions 41–51 match the 'HIGH' region motif; it reads PYLNGNLHAGH. A 'KMSKS' region motif is present at residues 632 to 636; it reads KMSKS. Lysine 635 provides a ligand contact to ATP.

This sequence belongs to the class-I aminoacyl-tRNA synthetase family.

It is found in the cytoplasm. It carries out the reaction tRNA(Leu) + L-leucine + ATP = L-leucyl-tRNA(Leu) + AMP + diphosphate. The sequence is that of Leucine--tRNA ligase from Methanosarcina mazei (strain ATCC BAA-159 / DSM 3647 / Goe1 / Go1 / JCM 11833 / OCM 88) (Methanosarcina frisia).